The chain runs to 346 residues: GTP 3',8-cyclase (346 aa).

The region spanning 10 to 240 (QRSRPLRVLR…VTRIRARWPL (231 aa)) is the Radical SAM core domain. Arg-19 serves as a coordination point for GTP. [4Fe-4S] cluster-binding residues include Cys-26 and Cys-30. Residue Tyr-32 coordinates S-adenosyl-L-methionine. Cys-33 provides a ligand contact to [4Fe-4S] cluster. Arg-65 is a GTP binding site. Residue Gly-69 coordinates S-adenosyl-L-methionine. Thr-104 provides a ligand contact to GTP. Ser-129 contributes to the S-adenosyl-L-methionine binding site. Residue Lys-177 coordinates GTP. Met-211 provides a ligand contact to S-adenosyl-L-methionine. Cys-274 and Cys-277 together coordinate [4Fe-4S] cluster. 279–281 (RLR) is a binding site for GTP. Residue Cys-291 coordinates [4Fe-4S] cluster. A disordered region spans residues 326–346 (SDERQQTTGSMPHAEMAYLGG).

Belongs to the radical SAM superfamily. MoaA family. In terms of assembly, monomer and homodimer. [4Fe-4S] cluster is required as a cofactor.

The catalysed reaction is GTP + AH2 + S-adenosyl-L-methionine = (8S)-3',8-cyclo-7,8-dihydroguanosine 5'-triphosphate + 5'-deoxyadenosine + L-methionine + A + H(+). It functions in the pathway cofactor biosynthesis; molybdopterin biosynthesis. Catalyzes the cyclization of GTP to (8S)-3',8-cyclo-7,8-dihydroguanosine 5'-triphosphate. This is GTP 3',8-cyclase from Parasynechococcus marenigrum (strain WH8102).